The following is a 424-amino-acid chain: Cuticlin-1 (424 aa).

An N-terminal signal peptide occupies residues 1 to 18 (MTWKPIICLAALVLSASA). Topologically, residues 19–392 (IPVDNNVEGE…ATSTGICLTP (374 aa)) are extracellular. The 246-residue stretch at 32 to 277 (ECGPNSITVN…PTCSEPQGFG (246 aa)) folds into the ZP domain. An intrachain disulfide couples cysteine 197 to cysteine 252. 4 repeat units span residues 302–305 (AAPV), 307–311 (AAAPV), 312–315 (AAPV), and 320–323 (AAPA). Residues 302–323 (AAPVAAAAPVAAPVAAAAAAPA) are 4 X 4 AA repeats of A-A-P-[AVI]. Residues 393–413 (IGFASFLGIGTIVATALSATI) form a helical membrane-spanning segment. At 414-424 (FYVARPTSHKH) the chain is on the cytoplasmic side.

The protein resides in the cell membrane. Its subcellular location is the secreted. Functionally, component of the cuticles, which contributes to the formation of extracellular envelopes protecting the organism from the environment. Plays a role in alae formation in dauer larvae. The chain is Cuticlin-1 from Caenorhabditis elegans.